The chain runs to 476 residues: PRAME family member 5 (476 aa).

An LRR 1; degenerate repeat occupies 97 to 124 (RWKLQVLDLQDVCENFWMVWSEAMAHGC). The stretch at 179-203 (HLCCKKLKILGMPFRNIRSILKMVN) is one LRR 2; degenerate repeat. The LRR 3; degenerate repeat unit spans residues 204–230 (LDCIQEVEVNCKWVLPILTQFTPYLGH). The stretch at 231–266 (MRNLQKLVLSHMDVSRYVSPEQKKEIVTQFTTQFLK) is one LRR 4; degenerate repeat. 5 LRR repeats span residues 267–292 (LCCL…LSCL), 293–324 (KTSL…SQLK), 325–345 (TLDL…QILL), 349–376 (AATL…ALSR), and 377–401 (CFEL…LLSH).

Belongs to the PRAME family.

This is PRAME family member 5 from Homo sapiens (Human).